The primary structure comprises 259 residues: Phosphatidylserine decarboxylase proenzyme (259 aa).

The active-site Schiff-base intermediate with substrate; via pyruvic acid is the serine 183. Serine 183 is modified (pyruvic acid (Ser); by autocatalysis).

The protein belongs to the phosphatidylserine decarboxylase family. PSD-A subfamily. In terms of assembly, heterodimer of a large membrane-associated beta subunit and a small pyruvoyl-containing alpha subunit. The cofactor is pyruvate. Post-translationally, is synthesized initially as an inactive proenzyme. Formation of the active enzyme involves a self-maturation process in which the active site pyruvoyl group is generated from an internal serine residue via an autocatalytic post-translational modification. Two non-identical subunits are generated from the proenzyme in this reaction, and the pyruvate is formed at the N-terminus of the alpha chain, which is derived from the carboxyl end of the proenzyme. The post-translation cleavage follows an unusual pathway, termed non-hydrolytic serinolysis, in which the side chain hydroxyl group of the serine supplies its oxygen atom to form the C-terminus of the beta chain, while the remainder of the serine residue undergoes an oxidative deamination to produce ammonia and the pyruvoyl prosthetic group on the alpha chain.

The protein localises to the cell membrane. The enzyme catalyses a 1,2-diacyl-sn-glycero-3-phospho-L-serine + H(+) = a 1,2-diacyl-sn-glycero-3-phosphoethanolamine + CO2. It participates in phospholipid metabolism; phosphatidylethanolamine biosynthesis; phosphatidylethanolamine from CDP-diacylglycerol: step 2/2. In terms of biological role, catalyzes the formation of phosphatidylethanolamine (PtdEtn) from phosphatidylserine (PtdSer). This chain is Phosphatidylserine decarboxylase proenzyme, found in Neisseria gonorrhoeae (strain ATCC 700825 / FA 1090).